Here is a 269-residue protein sequence, read N- to C-terminus: Putative hydro-lyase Swoo_1731 (269 aa).

Belongs to the D-glutamate cyclase family.

The chain is Putative hydro-lyase Swoo_1731 from Shewanella woodyi (strain ATCC 51908 / MS32).